We begin with the raw amino-acid sequence, 221 residues long: PKHD-type hydroxylase PMT9312_1262 (221 aa).

The region spanning 80 to 174 (IIHGIMFTKS…RLVCVGWIES (95 aa)) is the Fe2OG dioxygenase domain. Residues histidine 98, aspartate 100, and histidine 155 each coordinate Fe cation. Arginine 165 is a 2-oxoglutarate binding site.

It depends on Fe(2+) as a cofactor. Requires L-ascorbate as cofactor.

The polypeptide is PKHD-type hydroxylase PMT9312_1262 (Prochlorococcus marinus (strain MIT 9312)).